We begin with the raw amino-acid sequence, 177 residues long: Probable DNA-directed RNA polymerase subunit delta (177 aa).

The HTH HARE-type domain maps to 14-81; the sequence is CSMIEVVHSV…GENRWGLRSW (68 aa). The segment at 90-177 is disordered; sequence EILPQPKPKK…ETEEEEEEEL (88 aa). Acidic residues predominate over residues 106–177; it reads DGFDDYIEED…ETEEEEEEEL (72 aa).

The protein belongs to the RpoE family. RNAP is composed of a core of 2 alpha, a beta and a beta' subunits. The core is associated with a delta subunit and one of several sigma factors.

In terms of biological role, participates in both the initiation and recycling phases of transcription. In the presence of the delta subunit, RNAP displays an increased specificity of transcription, a decreased affinity for nucleic acids, and an increased efficiency of RNA synthesis because of enhanced recycling. The chain is Probable DNA-directed RNA polymerase subunit delta from Bacillus cereus (strain B4264).